The following is a 505-amino-acid chain: MTRPKPVALCILDGWGLSERREGNAPLLADTPNMDRLMATCPHATLTTFGPDVGLPSGQMGNSEVGHTNIGAGRVVAMDLGQIDLAIEEGLFAQNSRLRAFIVTLQDSGGTAHLMGVVSDGGVHGHINHMIAAAKALADENIPVVIHALTDGRDVAPRSALGYFETLQAALPDGVEIATVTGRYFAMDRDNRWDRVSKAYQAIVTGTGRKAASASDAVDQAYGQGENDEFISPTVLGGYTGAKDNDGFFCLNFRADRAREIMAAIGDPDFTAFETGARPKWASLMGMAQYSEAHANYMTTMYPKPEIVNTLGDWVAQQGLRQYRLAETEKYPHVTFFLNGGEEVSFDGEDRLMPKSPDVATYDLQPEMSSKEVTDAFVAAIEEGYDLIVVNYANPDMVGHTGDLQAAMKACEAVDQGLGRVLAALEKAGGAMIVTADHGNCDVMIDPETGGPHTAHTLNPVPVVVVGAPDGATLRDGRLADLAPTILHLMGLESPKEMTGKCLIS.

2 residues coordinate Mn(2+): D13 and S63. Catalysis depends on S63, which acts as the Phosphoserine intermediate. Substrate contacts are provided by residues H124, 153-154, R183, R189, 254-257, and K330; these read RD and RADR. D396, H400, D437, H438, and H456 together coordinate Mn(2+).

It belongs to the BPG-independent phosphoglycerate mutase family. As to quaternary structure, monomer. Mn(2+) is required as a cofactor.

The catalysed reaction is (2R)-2-phosphoglycerate = (2R)-3-phosphoglycerate. It functions in the pathway carbohydrate degradation; glycolysis; pyruvate from D-glyceraldehyde 3-phosphate: step 3/5. Catalyzes the interconversion of 2-phosphoglycerate and 3-phosphoglycerate. In Roseobacter denitrificans (strain ATCC 33942 / OCh 114) (Erythrobacter sp. (strain OCh 114)), this protein is 2,3-bisphosphoglycerate-independent phosphoglycerate mutase.